The following is a 412-amino-acid chain: Ribosomal RNA large subunit methyltransferase G (412 aa).

Residues 386–412 are disordered; that stretch reads KAEPHENGESSSDTPNPQSSLYGGVKR. Positions 394-406 are enriched in polar residues; that stretch reads ESSSDTPNPQSSL.

Belongs to the methyltransferase superfamily. RlmG family.

The protein localises to the cytoplasm. The catalysed reaction is guanosine(1835) in 23S rRNA + S-adenosyl-L-methionine = N(2)-methylguanosine(1835) in 23S rRNA + S-adenosyl-L-homocysteine + H(+). Functionally, specifically methylates the guanine in position 1835 (m2G1835) of 23S rRNA. This is Ribosomal RNA large subunit methyltransferase G from Shewanella sediminis (strain HAW-EB3).